A 168-amino-acid polypeptide reads, in one-letter code: Secreted RxLR effector protein RXLR-C06 (168 aa).

Positions 1-22 are cleaved as a signal peptide; it reads MRIQLLWLSFAVLSTILSTCDA. A disordered region spans residues 25 to 52; the sequence is DKLDPQRVQPNQNGSGHNQSIRSALKTS. A compositionally biased stretch (polar residues) spans 32–50; the sequence is VQPNQNGSGHNQSIRSALK. N-linked (GlcNAc...) asparagine glycosylation is found at Asn-37 and Asn-42. Residues 46–63 carry the RxLR-dEER motif; that stretch reads RSALKTSHGKTIADDEER. The IQ domain occupies 78-107; the sequence is YKAIVAKLSKYFRDYHERREIRKQRILNKS. Residue Asn-105 is glycosylated (N-linked (GlcNAc...) asparagine).

Belongs to the RxLR effector family.

It localises to the secreted. It is found in the host Golgi apparatus. Functionally, secreted effector that suppresses pattern-triggered immunity (PTI) in plant host. The sequence is that of Secreted RxLR effector protein RXLR-C06 from Plasmopara halstedii (Downy mildew of sunflower).